A 330-amino-acid polypeptide reads, in one-letter code: Putative quinone oxidoreductase YhfP (330 aa).

NADP(+)-binding positions include tyrosine 45, 160 to 163 (TGGV), 182 to 184 (TGN), arginine 202, leucine 248, isoleucine 262, serine 273, and asparagine 320.

The protein belongs to the zinc-containing alcohol dehydrogenase family. Quinone oxidoreductase subfamily. In terms of assembly, homodimer, or homotetramer.

It is found in the cytoplasm. In Bacillus subtilis (strain 168), this protein is Putative quinone oxidoreductase YhfP (yhfP).